We begin with the raw amino-acid sequence, 121 residues long: Small ribosomal subunit protein uS13 (121 aa).

A disordered region spans residues 95–121 (LPVRGQNTKNNARTRKGKAVAIAGKKK). Basic residues predominate over residues 106 to 121 (ARTRKGKAVAIAGKKK).

It belongs to the universal ribosomal protein uS13 family. In terms of assembly, part of the 30S ribosomal subunit. Forms a loose heterodimer with protein S19. Forms two bridges to the 50S subunit in the 70S ribosome.

Its function is as follows. Located at the top of the head of the 30S subunit, it contacts several helices of the 16S rRNA. In the 70S ribosome it contacts the 23S rRNA (bridge B1a) and protein L5 of the 50S subunit (bridge B1b), connecting the 2 subunits; these bridges are implicated in subunit movement. Contacts the tRNAs in the A and P-sites. The sequence is that of Small ribosomal subunit protein uS13 from Streptococcus equi subsp. zooepidemicus (strain H70).